Consider the following 432-residue polypeptide: Histidinol dehydrogenase (432 aa).

3 residues coordinate NAD(+): Y133, Q194, and N217. Residues S240, Q262, and H265 each coordinate substrate. Residues Q262 and H265 each contribute to the Zn(2+) site. Residues E330 and H331 each act as proton acceptor in the active site. Positions 331, 364, 418, and 423 each coordinate substrate. D364 contacts Zn(2+). H423 contacts Zn(2+).

This sequence belongs to the histidinol dehydrogenase family. Zn(2+) is required as a cofactor.

The enzyme catalyses L-histidinol + 2 NAD(+) + H2O = L-histidine + 2 NADH + 3 H(+). It participates in amino-acid biosynthesis; L-histidine biosynthesis; L-histidine from 5-phospho-alpha-D-ribose 1-diphosphate: step 9/9. Its function is as follows. Catalyzes the sequential NAD-dependent oxidations of L-histidinol to L-histidinaldehyde and then to L-histidine. This Nitrosomonas europaea (strain ATCC 19718 / CIP 103999 / KCTC 2705 / NBRC 14298) protein is Histidinol dehydrogenase.